The sequence spans 29 residues: Protamine-like protein (29 aa).

The disordered stretch occupies residues 1-29; that stretch reads MRSFDQGSTRAPARERCRRQRPEGRSAQR. A compositionally biased stretch (basic and acidic residues) spans 12–29; it reads PARERCRRQRPEGRSAQR.

The polypeptide is Protamine-like protein (tpr) (Escherichia coli (strain K12)).